The primary structure comprises 418 residues: UDP-N-acetylglucosamine 1-carboxyvinyltransferase (418 aa).

22–23 is a binding site for phosphoenolpyruvate; that stretch reads KN. Position 93 (Arg-93) interacts with UDP-N-acetyl-alpha-D-glucosamine. Cys-117 acts as the Proton donor in catalysis. The residue at position 117 (Cys-117) is a 2-(S-cysteinyl)pyruvic acid O-phosphothioketal. Residues Asp-305 and Val-327 each contribute to the UDP-N-acetyl-alpha-D-glucosamine site.

This sequence belongs to the EPSP synthase family. MurA subfamily.

It localises to the cytoplasm. The enzyme catalyses phosphoenolpyruvate + UDP-N-acetyl-alpha-D-glucosamine = UDP-N-acetyl-3-O-(1-carboxyvinyl)-alpha-D-glucosamine + phosphate. It participates in cell wall biogenesis; peptidoglycan biosynthesis. Cell wall formation. Adds enolpyruvyl to UDP-N-acetylglucosamine. This is UDP-N-acetylglucosamine 1-carboxyvinyltransferase from Halorhodospira halophila (strain DSM 244 / SL1) (Ectothiorhodospira halophila (strain DSM 244 / SL1)).